The sequence spans 617 residues: Probable Xaa-Pro aminopeptidase P (617 aa).

Positions 414, 425, 523, and 537 each coordinate Mn(2+).

Belongs to the peptidase M24B family. Requires Mn(2+) as cofactor.

It catalyses the reaction Release of any N-terminal amino acid, including proline, that is linked to proline, even from a dipeptide or tripeptide.. Its function is as follows. Catalyzes the removal of a penultimate prolyl residue from the N-termini of peptides. The sequence is that of Probable Xaa-Pro aminopeptidase P (AMPP) from Ajellomyces dermatitidis (strain ER-3 / ATCC MYA-2586) (Blastomyces dermatitidis).